A 662-amino-acid chain; its full sequence is MDKKKLIEELVEELNKYAYEYYVLGNSSVTDKDYDKKYYELVDLEKETGYKLPYSPTQRVGDVILPEFKKYTHKARLWSLDKAQTLEEIREWHNRNVKFLEEYNRTSDEELPPLKYILTKKFDGLTINLSYDENGVLITGATRGTGAIGEDVTAQVKTIKSIPLKIDCHDFLEIHGEAIMTTEAFEKYNSEADTPLKNLRNGAAGALRNLNVAETAKRNLSAFFYDVGYKEGAPFKTYMEMLNFIKTKGFPMDDYIRECKTLDEIQKEIDYIRDIRFDLNYDIDGLVIAIDDIRTRELLGYTVKFPKWAIAYKFEAQEATTKLLDVEWNVGRSGRVSPTAILEPVELAGVTVKRATLNNMDDIARKGVRLGAEVFVRRSNDVIPEIMGVVPESLEGTKEIEEPKVCPACGAHLVHEGVHIYCENTLGCKPQMVKTIVHFAGREAMNIAGFSERTAEQLFEKLDIRDISDLYKLEYEKLLDLDKFGPKKAQNLLDAIEKSKDCTLEAFLYSLGIPNVGVKTAKDLVKRFESLENLEKATFEELVSVQDVGDIVARSIIEFFKEERTLKVINELLSLGVNPHYEKKEVLESPFMGKTVVVTGTLENYSRTSIKEKLESLGAKVSGSVSKKTDFVIAGEAAGSKYDKAKSLGITILSEEEFENMI.

NAD(+)-binding positions include 31-35 (DKDYD) and 79-80 (SL). The active-site N6-AMP-lysine intermediate is the lysine 121. NAD(+) contacts are provided by arginine 143, glutamate 177, and lysine 313. 4 residues coordinate Zn(2+): cysteine 406, cysteine 409, cysteine 422, and cysteine 428. The region spanning 586-662 (VLESPFMGKT…LSEEEFENMI (77 aa)) is the BRCT domain.

It belongs to the NAD-dependent DNA ligase family. LigA subfamily. Requires Mg(2+) as cofactor. Mn(2+) is required as a cofactor.

The enzyme catalyses NAD(+) + (deoxyribonucleotide)n-3'-hydroxyl + 5'-phospho-(deoxyribonucleotide)m = (deoxyribonucleotide)n+m + AMP + beta-nicotinamide D-nucleotide.. DNA ligase that catalyzes the formation of phosphodiester linkages between 5'-phosphoryl and 3'-hydroxyl groups in double-stranded DNA using NAD as a coenzyme and as the energy source for the reaction. It is essential for DNA replication and repair of damaged DNA. This chain is DNA ligase, found in Clostridium perfringens (strain SM101 / Type A).